A 511-amino-acid polypeptide reads, in one-letter code: GMP synthase [glutamine-hydrolyzing] (511 aa).

Residues 5-195 (DILVLDFGSQ…AKYACNCDSV (191 aa)) form the Glutamine amidotransferase type-1 domain. Cysteine 82 serves as the catalytic Nucleophile. Residues histidine 169 and glutamate 171 contribute to the active site. In terms of domain architecture, GMPS ATP-PPase spans 196-386 (WNMGSFAKTQ…LGLSKDVVYR (191 aa)). 223-229 (SGGVDSS) serves as a coordination point for ATP.

In terms of assembly, homodimer.

It catalyses the reaction XMP + L-glutamine + ATP + H2O = GMP + L-glutamate + AMP + diphosphate + 2 H(+). It participates in purine metabolism; GMP biosynthesis; GMP from XMP (L-Gln route): step 1/1. Catalyzes the synthesis of GMP from XMP. The polypeptide is GMP synthase [glutamine-hydrolyzing] (Campylobacter lari (strain RM2100 / D67 / ATCC BAA-1060)).